Consider the following 201-residue polypeptide: Small ribosomal subunit protein uS4c (201 aa).

The disordered stretch occupies residues 15-44; the sequence is LGALPGLTSKRPRSGSDLRNQSRSGKKSQY. Residues 89 to 150 form the S4 RNA-binding domain; that stretch reads MRLDNILFRL…EQRSRALIQN (62 aa).

It belongs to the universal ribosomal protein uS4 family. Part of the 30S ribosomal subunit. Contacts protein S5. The interaction surface between S4 and S5 is involved in control of translational fidelity.

It localises to the plastid. Its subcellular location is the chloroplast. Its function is as follows. One of the primary rRNA binding proteins, it binds directly to 16S rRNA where it nucleates assembly of the body of the 30S subunit. Functionally, with S5 and S12 plays an important role in translational accuracy. This chain is Small ribosomal subunit protein uS4c (rps4), found in Calycanthus floridus var. glaucus (Eastern sweetshrub).